A 520-amino-acid chain; its full sequence is Cytochrome P450 84A1 (520 aa).

Position 1 is an N-acetylmethionine (methionine 1). Residues 12–32 (LSDPTTSLVIVVSLFIFISFI) form a helical membrane-spanning segment. Cysteine 458 serves as a coordination point for heme.

The protein belongs to the cytochrome P450 family. It depends on heme as a cofactor.

The protein localises to the membrane. The protein operates within aromatic compound metabolism; phenylpropanoid biosynthesis. The protein is Cytochrome P450 84A1 (CYP84A1) of Arabidopsis thaliana (Mouse-ear cress).